The chain runs to 258 residues: Ribosomal RNA small subunit methyltransferase J (258 aa).

S-adenosyl-L-methionine is bound by residues 123-124 (ER) and D177. A disordered region spans residues 232 to 258 (IDGPKPSHSLEGKSSRYDIYPKKALKA). A compositionally biased stretch (basic and acidic residues) spans 239–252 (HSLEGKSSRYDIYP).

Belongs to the methyltransferase superfamily. RsmJ family.

The protein localises to the cytoplasm. The enzyme catalyses guanosine(1516) in 16S rRNA + S-adenosyl-L-methionine = N(2)-methylguanosine(1516) in 16S rRNA + S-adenosyl-L-homocysteine + H(+). Its function is as follows. Specifically methylates the guanosine in position 1516 of 16S rRNA. This Pseudomonas putida (strain W619) protein is Ribosomal RNA small subunit methyltransferase J.